Here is a 977-residue protein sequence, read N- to C-terminus: MKPKSVSEIREIFLNYFKDKSHNVVPSSSLLPAGDPTLLFTTAGMVQFKPLFTGAVELPYTRATSCQKCLRTTDLEVVGKTERHCTFFEMLGNFSFGDYFKEEAIEYALDCSVNHFGFDKNKIWVTVYTDDDEAEKIWLSKGIPKERITRLGKKDNFWGPAGDSGACGPCSELYLDRGIEKGGPNCATSGTCKPGCDCDRFLEFWNIVFNQFNQDTEGNLHPLKQTGIDTGSGLERVALLLQEVDSVYDTNELRKIISFYEELSGISYEDKTLSEISEKKNNNQQISSQVRNETKSIQDSRKTAFRVVTDHIRSVLFSIGDGIYPDRTGRGYVIRRLIRRATLFGRKLNFKEPFLYKLVDKVIEIYKARYPELQRNAAAITKTILVEEELFLKTLELGLEKIESLVQKTKAGGKTIFSGADAFLLYGTYGFPAEMTEEIVAEQGLDFDKKGFQEELEKDRQFSRESWKVNKVSLMTGLNVDKTEFLGYSSVSGKGNITHLFYNSPKSSNSLSQVDSKLQSSTPAGTGSYDSKQVSSLKEGQAGAIVLNKTPFYPEGGGQVGDIGFLRQGKNVFKVFDTQKENDSIIHFGEVLSGEFIVSQELEAEVEITRRERLKFHHSGTHLLNGALRTLLGDHVLQKGSIVSPEYLRFDFSHPSSLTSEEIRQIESWVNESIRKNFPVETKELSIEDAKKTGAVATFGEKYGERVRVVQMGDASIEFCGGTHVSRTGEIGYFFIKKESSPGAGNRRIEGVCGPAVIETFQNRFSELTESVQNLNLKIKSELGEEGTKILILSFIPGPDEIREKLEKEGASAVSFFRDLSENIATKIEENTSSFLKIKKNLAERDFENNTSVIENVLASSVDTGIGKIVSAIFEDKDPNSLKGLSDNLKVREKNLLVILGSRNSENASIVITCSSELTLKGIHCGNLIKTACELLGGKGGGRPDMAQGGGKEKQNLESAIAGVINEAKQILTGERV.

The tract at residues 512 to 535 is disordered; that stretch reads SQVDSKLQSSTPAGTGSYDSKQVS. Histidine 618, histidine 622, cysteine 720, and histidine 724 together coordinate Zn(2+).

Belongs to the class-II aminoacyl-tRNA synthetase family. Zn(2+) is required as a cofactor.

Its subcellular location is the cytoplasm. The enzyme catalyses tRNA(Ala) + L-alanine + ATP = L-alanyl-tRNA(Ala) + AMP + diphosphate. Its function is as follows. Catalyzes the attachment of alanine to tRNA(Ala) in a two-step reaction: alanine is first activated by ATP to form Ala-AMP and then transferred to the acceptor end of tRNA(Ala). Also edits incorrectly charged Ser-tRNA(Ala) and Gly-tRNA(Ala) via its editing domain. The polypeptide is Alanine--tRNA ligase (Leptospira interrogans serogroup Icterohaemorrhagiae serovar Lai (strain 56601)).